The following is a 452-amino-acid chain: 3-phosphoshikimate 1-carboxyvinyltransferase (452 aa).

The disordered stretch occupies residues 1–23; that stretch reads MLNGSASKPATARKSAGLTGSVR. 3 residues coordinate 3-phosphoshikimate: lysine 28, serine 29, and arginine 33. Lysine 28 lines the phosphoenolpyruvate pocket. The phosphoenolpyruvate site is built by glycine 100 and arginine 128. 4 residues coordinate 3-phosphoshikimate: serine 173, glutamine 175, aspartate 326, and lysine 353. Glutamine 175 provides a ligand contact to phosphoenolpyruvate. Aspartate 326 acts as the Proton acceptor in catalysis. 2 residues coordinate phosphoenolpyruvate: arginine 357 and arginine 405.

Belongs to the EPSP synthase family. Monomer.

It localises to the cytoplasm. The enzyme catalyses 3-phosphoshikimate + phosphoenolpyruvate = 5-O-(1-carboxyvinyl)-3-phosphoshikimate + phosphate. It participates in metabolic intermediate biosynthesis; chorismate biosynthesis; chorismate from D-erythrose 4-phosphate and phosphoenolpyruvate: step 6/7. Catalyzes the transfer of the enolpyruvyl moiety of phosphoenolpyruvate (PEP) to the 5-hydroxyl of shikimate-3-phosphate (S3P) to produce enolpyruvyl shikimate-3-phosphate and inorganic phosphate. The protein is 3-phosphoshikimate 1-carboxyvinyltransferase of Rhizobium johnstonii (strain DSM 114642 / LMG 32736 / 3841) (Rhizobium leguminosarum bv. viciae).